Consider the following 341-residue polypeptide: Anthranilate phosphoribosyltransferase (341 aa).

5-phospho-alpha-D-ribose 1-diphosphate-binding positions include Gly-80, 83 to 84 (GD), Thr-88, 90 to 93 (NIST), 108 to 116 (KHGNRSVSS), and Ser-120. Residue Gly-80 participates in anthranilate binding. Mg(2+) is bound at residue Ser-92. An anthranilate-binding site is contributed by Asn-111. Arg-166 is a binding site for anthranilate. Mg(2+)-binding residues include Asp-225 and Glu-226.

Belongs to the anthranilate phosphoribosyltransferase family. As to quaternary structure, homodimer. It depends on Mg(2+) as a cofactor.

It catalyses the reaction N-(5-phospho-beta-D-ribosyl)anthranilate + diphosphate = 5-phospho-alpha-D-ribose 1-diphosphate + anthranilate. It functions in the pathway amino-acid biosynthesis; L-tryptophan biosynthesis; L-tryptophan from chorismate: step 2/5. Catalyzes the transfer of the phosphoribosyl group of 5-phosphorylribose-1-pyrophosphate (PRPP) to anthranilate to yield N-(5'-phosphoribosyl)-anthranilate (PRA). The protein is Anthranilate phosphoribosyltransferase of Shouchella clausii (strain KSM-K16) (Alkalihalobacillus clausii).